Reading from the N-terminus, the 546-residue chain is T-complex protein 1 subunit epsilon (546 aa).

Belongs to the TCP-1 chaperonin family. As to quaternary structure, heterooligomeric complex of about 850 to 900 kDa that forms two stacked rings, 12 to 16 nm in diameter.

It is found in the cytoplasm. Its function is as follows. Molecular chaperone; assists the folding of proteins upon ATP hydrolysis. Known to play a role, in vitro, in the folding of actin and tubulin. The polypeptide is T-complex protein 1 subunit epsilon (cct5) (Schizosaccharomyces pombe (strain 972 / ATCC 24843) (Fission yeast)).